We begin with the raw amino-acid sequence, 344 residues long: N-acetyl-gamma-glutamyl-phosphate reductase (344 aa).

Residue Cys-150 is part of the active site.

It belongs to the NAGSA dehydrogenase family. Type 1 subfamily.

It is found in the cytoplasm. It catalyses the reaction N-acetyl-L-glutamate 5-semialdehyde + phosphate + NADP(+) = N-acetyl-L-glutamyl 5-phosphate + NADPH + H(+). It functions in the pathway amino-acid biosynthesis; L-arginine biosynthesis; N(2)-acetyl-L-ornithine from L-glutamate: step 3/4. In terms of biological role, catalyzes the NADPH-dependent reduction of N-acetyl-5-glutamyl phosphate to yield N-acetyl-L-glutamate 5-semialdehyde. The sequence is that of N-acetyl-gamma-glutamyl-phosphate reductase from Pseudomonas savastanoi pv. phaseolicola (strain 1448A / Race 6) (Pseudomonas syringae pv. phaseolicola (strain 1448A / Race 6)).